The primary structure comprises 154 residues: 3-hydroxyacyl-[acyl-carrier-protein] dehydratase FabZ (154 aa).

Histidine 54 is an active-site residue.

This sequence belongs to the thioester dehydratase family. FabZ subfamily.

Its subcellular location is the cytoplasm. It carries out the reaction a (3R)-hydroxyacyl-[ACP] = a (2E)-enoyl-[ACP] + H2O. Its function is as follows. Involved in unsaturated fatty acids biosynthesis. Catalyzes the dehydration of short chain beta-hydroxyacyl-ACPs and long chain saturated and unsaturated beta-hydroxyacyl-ACPs. The sequence is that of 3-hydroxyacyl-[acyl-carrier-protein] dehydratase FabZ from Chlamydia abortus (strain DSM 27085 / S26/3) (Chlamydophila abortus).